The chain runs to 356 residues: Methionine import ATP-binding protein MetN 1 (356 aa).

Residues 2 to 241 (IELKNISVTF…PQQPLTKDFI (240 aa)) form the ABC transporter domain. Position 38-45 (38-45 (GYSGAGKS)) interacts with ATP.

Belongs to the ABC transporter superfamily. Methionine importer (TC 3.A.1.24) family. In terms of assembly, the complex is composed of two ATP-binding proteins (MetN), two transmembrane proteins (MetI) and a solute-binding protein (MetQ).

Its subcellular location is the cell membrane. The catalysed reaction is L-methionine(out) + ATP + H2O = L-methionine(in) + ADP + phosphate + H(+). It carries out the reaction D-methionine(out) + ATP + H2O = D-methionine(in) + ADP + phosphate + H(+). In terms of biological role, part of the ABC transporter complex MetNIQ involved in methionine import. Responsible for energy coupling to the transport system. The protein is Methionine import ATP-binding protein MetN 1 of Enterococcus faecalis (strain ATCC 700802 / V583).